Consider the following 71-residue polypeptide: UPF0346 protein SZO_05010 (71 aa).

It belongs to the UPF0346 family.

In Streptococcus equi subsp. zooepidemicus (strain H70), this protein is UPF0346 protein SZO_05010.